The primary structure comprises 150 residues: Lipoprotein signal peptidase (150 aa).

Helical transmembrane passes span 5-25, 59-79, and 82-102; these read LSLV…NWVV, QQWF…WFLW, and MGQN…LGNF. Active-site residues include D113 and D129. A helical transmembrane segment spans residues 124–144; sequence IFNIADILLSVGFVVLFIAIL.

Belongs to the peptidase A8 family.

It is found in the cell membrane. The enzyme catalyses Release of signal peptides from bacterial membrane prolipoproteins. Hydrolyzes -Xaa-Yaa-Zaa-|-(S,diacylglyceryl)Cys-, in which Xaa is hydrophobic (preferably Leu), and Yaa (Ala or Ser) and Zaa (Gly or Ala) have small, neutral side chains.. Its pathway is protein modification; lipoprotein biosynthesis (signal peptide cleavage). This protein specifically catalyzes the removal of signal peptides from prolipoproteins. This Lactococcus lactis subsp. cremoris (strain SK11) protein is Lipoprotein signal peptidase.